Reading from the N-terminus, the 119-residue chain is NADH-quinone oxidoreductase subunit A (119 aa).

The next 3 helical transmembrane spans lie at 7–27, 63–83, and 88–108; these read FPVLLFIVVGVGLGLALMTIG, LIAILFILFDLETAFLFPWGV, and IGWPGFFAMGVFLLEFLVGFV.

It belongs to the complex I subunit 3 family. NDH-1 is composed of 14 different subunits. Subunits NuoA, H, J, K, L, M, N constitute the membrane sector of the complex.

The protein resides in the cell inner membrane. It catalyses the reaction a quinone + NADH + 5 H(+)(in) = a quinol + NAD(+) + 4 H(+)(out). Its function is as follows. NDH-1 shuttles electrons from NADH, via FMN and iron-sulfur (Fe-S) centers, to quinones in the respiratory chain. The immediate electron acceptor for the enzyme in this species is believed to be ubiquinone. Couples the redox reaction to proton translocation (for every two electrons transferred, four hydrogen ions are translocated across the cytoplasmic membrane), and thus conserves the redox energy in a proton gradient. The sequence is that of NADH-quinone oxidoreductase subunit A from Ralstonia pickettii (strain 12J).